Here is a 386-residue protein sequence, read N- to C-terminus: Zinc finger CCCH domain-containing protein 2 (386 aa).

2 consecutive C3H1-type zinc fingers follow at residues 116–143 and 151–175; these read HYSG…HGVF and RYRT…HTPD. Disordered regions lie at residues 180-200 and 220-252; these read LPAQ…ESYD and SSPT…RRGS. Positions 182–192 are enriched in polar residues; it reads AQQSSPRSVAS. Positions 220–229 are enriched in low complexity; the sequence is SSPTSTLMSP. A compositionally biased stretch (pro residues) spans 230–241; it reads PKSPPSESPPLS.

The protein resides in the nucleus. Involved in leaf senescence delay. May repress jasmonic acid (JA) signaling role in promoting leaf senescence. May regulate panicle development and pollination/fertilization process. This is Zinc finger CCCH domain-containing protein 2 from Oryza sativa subsp. japonica (Rice).